The chain runs to 394 residues: Putative 8-amino-7-oxononanoate synthase (394 aa).

Residue R30 coordinates substrate. Pyridoxal 5'-phosphate is bound at residue 117–118; it reads GY. H142 is a substrate binding site. Residues S190, 215–218, and 246–249 contribute to the pyridoxal 5'-phosphate site; these read DEAH and TLSK. Position 249 is an N6-(pyridoxal phosphate)lysine (K249). T364 is a substrate binding site.

It belongs to the class-II pyridoxal-phosphate-dependent aminotransferase family. BioF subfamily. Homodimer. Pyridoxal 5'-phosphate is required as a cofactor.

It catalyses the reaction 6-carboxyhexanoyl-[ACP] + L-alanine + H(+) = (8S)-8-amino-7-oxononanoate + holo-[ACP] + CO2. Its pathway is cofactor biosynthesis; biotin biosynthesis. In terms of biological role, catalyzes the decarboxylative condensation of pimeloyl-[acyl-carrier protein] and L-alanine to produce 8-amino-7-oxononanoate (AON), [acyl-carrier protein], and carbon dioxide. This is Putative 8-amino-7-oxononanoate synthase (bioF) from Nostoc punctiforme (strain ATCC 29133 / PCC 73102).